The sequence spans 141 residues: MKSKKQILRLRKRAEFLTVRNGEKRRGPLFLMEVRERTEEESNAAKTGDNPRVGFTVTKKNGNAVIRNRIRRRLKEAIRCHAGRDMAPSTDYVIVAREQALNAPFSQLTEELSRRITAKGERRSGGKRRTERPEPGPVNGK.

Disordered regions lie at residues 37 to 56 and 114 to 141; these read RTEEESNAAKTGDNPRVGFT and RRITAKGERRSGGKRRTERPEPGPVNGK. Residues 114-124 show a composition bias toward basic and acidic residues; that stretch reads RRITAKGERRS.

Belongs to the RnpA family. Consists of a catalytic RNA component (M1 or rnpB) and a protein subunit.

It catalyses the reaction Endonucleolytic cleavage of RNA, removing 5'-extranucleotides from tRNA precursor.. In terms of biological role, RNaseP catalyzes the removal of the 5'-leader sequence from pre-tRNA to produce the mature 5'-terminus. It can also cleave other RNA substrates such as 4.5S RNA. The protein component plays an auxiliary but essential role in vivo by binding to the 5'-leader sequence and broadening the substrate specificity of the ribozyme. This chain is Ribonuclease P protein component, found in Brucella melitensis biotype 2 (strain ATCC 23457).